The following is an 855-amino-acid chain: MNKRDFSELKNSESSEESSLVSSTETVRSSKRNKKFHKNNRQSNSFIISLNFTIRNDDDPFVYMKNPLSEFIKIGNFVYKTKSFVSLDKDYHDDNLDWKISLNRSQYDDVKDFIYDKNRVIVSSFTNEIQSSCFIKVELSTSTHYKFRVTKNELINYIVRTLNGHIVTIDQNIDIHYMGYPMTINIVNIGDDFIGKITGSTDVHFKNIDSNIVVMNQCIDISNKDVSVFLTKCISLNSNHDNNIRFPIIIDKKIINRYVKNTFDDTFTDNDYRTYTCDDIEYTFNIKVIGCNTQTKFKNTYKLLDDSSPIQIKSNTDNVILTSGKKKAKKICFYFQSSNKDSPSDNILFYNDLVDFITSKYNKITCNQSVKYLTGSKEIVLKADFISPHINDNTMYIIDSNTKISFNTDIKSSYFIAHNDKPTEIDTVTFKIKNNASGGLFSLMFGDDDSEKTVIFDSGKLEKTVRSKFPKRTVLKHKASIQYNGVTYQFVVQEIKFKEDSDNKSDNKSDNKSKNHLDKIKKKYTTYGIITSNTNIKFVPAKANKSYVINNSVEQTEISKNPVQELEKYVGGISKELETVVRTLCLSRGILKQEYLARGLRPVKGIILHGPPGTGKTSLSRNLGKILGCEGDRFRLMSGPEIFNKWVGGSESNIRAIFKPAKDAWKKHGDKSPVYMVVIDEIDAMLPSRSGSDGNPVRDSVVNQFLAEMDGLEVFNNLICIGITNRLELLDPATIRSGRFGIHIKIDLPDQEGRVKIFQIHTKKLQELNRLSDDVDISKLAVITEEFSGADIEGMVELASVYSLERLNKLDVINDDVINTHGLVTFEDFTKAAKEINHNKNKSDSTKDNINHMYL.

Over residues 1-13 the composition is skewed to basic and acidic residues; that stretch reads MNKRDFSELKNSE. The disordered stretch occupies residues 1–37; the sequence is MNKRDFSELKNSESSEESSLVSSTETVRSSKRNKKFH. Positions 17 to 27 are enriched in low complexity; sequence ESSLVSSTETV. An ATP-binding site is contributed by 610–617; that stretch reads GPPGTGKT.

Belongs to the AAA ATPase family.

This chain is Putative AAA family ATPase R476, found in Acanthamoeba polyphaga mimivirus (APMV).